The chain runs to 305 residues: MAAREESTQSANRVLRISQLDALELNKALEQLVWSQFTQCFHGFKPGLLARFEPEVKAFLWLFLWRFTIYSKNATVGQSVLNIQYKNDSSPNPVYQPPSKNQKLLYAVCTIGGRWLEERCYDLFRNRHLASFGKAKQCMNFVVGLLKLGELMNFLIFLQKGKFATLTERLLGIHSVFCKPQSMREVGFEYMNRELLWHGFAEFLVFLLPLINIQKLKAKLSSWCIPLTSTAGSDSTLGSSGKECALCGEWPTMPHTIGCEHVFCYYCVKSSFLFDMYFTCPKCGTEVHSVQPLKSGIEMSEVNAL.

The Peroxisomal matrix portion of the chain corresponds to 1-15 (MAAREESTQSANRVL). A helical transmembrane segment spans residues 16 to 42 (RISQLDALELNKALEQLVWSQFTQCFH). Residues 43 to 48 (GFKPGL) are Cytoplasmic-facing. A helical transmembrane segment spans residues 49 to 74 (LARFEPEVKAFLWLFLWRFTIYSKNA). The Peroxisomal matrix portion of the chain corresponds to 75 to 98 (TVGQSVLNIQYKNDSSPNPVYQPP). A helical membrane pass occupies residues 99–125 (SKNQKLLYAVCTIGGRWLEERCYDLFR). Over 126 to 133 (NRHLASFG) the chain is Cytoplasmic. Residues 134–160 (KAKQCMNFVVGLLKLGELMNFLIFLQK) traverse the membrane as a helical segment. The Peroxisomal matrix segment spans residues 161-187 (GKFATLTERLLGIHSVFCKPQSMREVG). The helical transmembrane segment at 188–211 (FEYMNRELLWHGFAEFLVFLLPLI) threads the bilayer. Over 212 to 305 (NIQKLKAKLS…GIEMSEVNAL (94 aa)) the chain is Cytoplasmic. Positions 244, 247, 259, 261, 264, 267, 280, and 283 each coordinate Zn(2+). Residues 244-284 (CALCGEWPTMPHTIGCEHVFCYYCVKSSFLFDMYFTCPKCG) form an RING-type zinc finger.

The protein belongs to the pex2/pex10/pex12 family. As to quaternary structure, component of the PEX2-PEX10-PEX12 retrotranslocation channel, composed of PEX2, PEX10 and PEX12. Post-translationally, forms intramolecular and intermolecular disulfide bonds in response to reactive oxygen species (ROS), promoting higher stability.

It localises to the peroxisome membrane. The catalysed reaction is [E2 ubiquitin-conjugating enzyme]-S-ubiquitinyl-L-cysteine + [acceptor protein]-L-cysteine = [E2 ubiquitin-conjugating enzyme]-L-cysteine + [acceptor protein]-S-ubiquitinyl-L-cysteine.. The enzyme catalyses S-ubiquitinyl-[E2 ubiquitin-conjugating enzyme]-L-cysteine + [acceptor protein]-L-lysine = [E2 ubiquitin-conjugating enzyme]-L-cysteine + N(6)-ubiquitinyl-[acceptor protein]-L-lysine.. The protein operates within protein modification; protein ubiquitination. In terms of biological role, E3 ubiquitin-protein ligase component of a retrotranslocation channel required for peroxisome organization by mediating export of the PEX5 receptor from peroxisomes to the cytosol, thereby promoting PEX5 recycling. The retrotranslocation channel is composed of PEX2, PEX10 and PEX12; each subunit contributing transmembrane segments that coassemble into an open channel that specifically allows the passage of PEX5 through the peroxisomal membrane. PEX2 also regulates peroxisome organization by acting as a E3 ubiquitin-protein ligase. PEX2 ubiquitinates PEX5 during its passage through the retrotranslocation channel: catalyzes monoubiquitination of PEX5 at 'Cys-11', a modification that acts as a signal for PEX5 extraction into the cytosol. Required for pexophagy in response to starvation by mediating ubiquitination of peroxisomal proteins, such as PEX5 and ABCD3/PMP70. Also involved in the response to reactive oxygen species (ROS) by mediating 'Lys-48'-linked polyubiquitination and subsequent degradation of PNPLA2/ATGL, thereby regulating lipolysis. This is Peroxisome biogenesis factor 2 (Pex2) from Rattus norvegicus (Rat).